The sequence spans 499 residues: MTDTQDKHYIIALDQGTTSSRAIIFDRDANVVGTSQREFAQHYPQAGWVEHDPMEIFATQSATMVEALAQAGISHAQVAALGITNQRETTVVWDKETGRPVYNAIVWQCRRSTEICAQLKRDGHEAYIRETTGLVTDPYFSGTKLKWILDNVEGARERAERGELLFGTIDTWLIWKFSGGKVHVTDYTNASRTLMFNIHSLQWDDKLLEILGIPRQMLPEVRPSSEVYGHTKSGIAIAGIAGDQQSALFGQMCVEPGQAKNTYGTGCFLLMNTGDQAVKSSHGLLTTIACGPRGEVAYALEGAVFNGGSTVQWLRDELKIVNDALDTEYFASKVKDSNGVYLVPAFTGLGAPYWDPYARGALFGLTRGVKVDHIIRAALESIAYQTRDVLDAMQQDCGQHLSELRVDGGAVANNFLMQFQADILGTCVERPQMRETTALGAAYLAGLACGFWSGLDELRDKAIIEREFSPQLDETQKEKLYAGWKKAVERTRDWEDHEA.

ADP is bound at residue threonine 17. Residues threonine 17, threonine 18, and serine 19 each coordinate ATP. Threonine 17 contacts sn-glycerol 3-phosphate. ADP is bound at residue arginine 21. Arginine 87, glutamate 88, tyrosine 139, and aspartate 243 together coordinate sn-glycerol 3-phosphate. 5 residues coordinate glycerol: arginine 87, glutamate 88, tyrosine 139, aspartate 243, and glutamine 244. ADP contacts are provided by threonine 265 and glycine 308. 4 residues coordinate ATP: threonine 265, glycine 308, glutamine 312, and glycine 409. Residues glycine 409 and asparagine 413 each contribute to the ADP site.

Belongs to the FGGY kinase family.

It carries out the reaction glycerol + ATP = sn-glycerol 3-phosphate + ADP + H(+). The protein operates within polyol metabolism; glycerol degradation via glycerol kinase pathway; sn-glycerol 3-phosphate from glycerol: step 1/1. Its activity is regulated as follows. Inhibited by fructose 1,6-bisphosphate (FBP). Its function is as follows. Key enzyme in the regulation of glycerol uptake and metabolism. Catalyzes the phosphorylation of glycerol to yield sn-glycerol 3-phosphate. In Pseudomonas putida (strain GB-1), this protein is Glycerol kinase.